Consider the following 608-residue polypeptide: Auxin response factor 3 (608 aa).

Residues 1 to 40 (MGGLIDLNVMETEEDETQTQTPSSASGSVSPTSSSSASVS) are disordered. The span at 18 to 40 (QTQTPSSASGSVSPTSSSSASVS) shows a compositional bias: low complexity. The TF-B3 DNA-binding region spans 159-261 (FCKTLTASDT…KLRLGVRRAS (103 aa)).

It belongs to the ARF family. As to quaternary structure, homo and heterodimers. As to expression, expressed in the whole plant.

Its subcellular location is the nucleus. Auxin response factors (ARFs) are transcriptional factors that bind specifically to the DNA sequence 5'-TGTCTC-3' found in the auxin-responsive promoter elements (AuxREs). Could act as transcriptional activator or repressor. Formation of heterodimers with Aux/IAA proteins may alter their ability to modulate early auxin response genes expression. Involved in the establishment or elaboration of tissue patterning during gynoecial development. This is Auxin response factor 3 (ARF3) from Arabidopsis thaliana (Mouse-ear cress).